The sequence spans 103 residues: Large ribosomal subunit protein bL21 (103 aa).

This sequence belongs to the bacterial ribosomal protein bL21 family. Part of the 50S ribosomal subunit. Contacts protein L20.

This protein binds to 23S rRNA in the presence of protein L20. This Ectopseudomonas mendocina (strain ymp) (Pseudomonas mendocina) protein is Large ribosomal subunit protein bL21.